The following is a 200-amino-acid chain: ADP-ribosylation factor-like protein 4D (200 aa).

The N-myristoyl glycine moiety is linked to residue Gly-2. GTP is bound by residues 27 to 34 (GLDSAGKT), 75 to 79 (DVGGQ), and 134 to 137 (NKQD).

This sequence belongs to the small GTPase superfamily. Arf family. Interacts with CYTH2; the interaction is direct and ARL4D GTP-dependent. Does not interact with ARL4D.

It is found in the nucleus. The protein localises to the nucleolus. Its subcellular location is the cell membrane. The protein resides in the cytoplasm. Its function is as follows. Small GTP-binding protein which cycles between an inactive GDP-bound and an active GTP-bound form, and the rate of cycling is regulated by guanine nucleotide exchange factors (GEF) and GTPase-activating proteins (GAP). GTP-binding protein that does not act as an allosteric activator of the cholera toxin catalytic subunit. Recruits CYTH1, CYTH2, CYTH3 and CYTH4 to the plasma membrane in GDP-bound form. The protein is ADP-ribosylation factor-like protein 4D (ARL4D) of Bos taurus (Bovine).